The following is a 390-amino-acid chain: Phosphopentomutase (390 aa).

Positions 11, 283, 288, 324, 325, and 336 each coordinate Mn(2+).

This sequence belongs to the phosphopentomutase family. Mn(2+) is required as a cofactor.

The protein localises to the cytoplasm. It carries out the reaction 2-deoxy-alpha-D-ribose 1-phosphate = 2-deoxy-D-ribose 5-phosphate. The catalysed reaction is alpha-D-ribose 1-phosphate = D-ribose 5-phosphate. The protein operates within carbohydrate degradation; 2-deoxy-D-ribose 1-phosphate degradation; D-glyceraldehyde 3-phosphate and acetaldehyde from 2-deoxy-alpha-D-ribose 1-phosphate: step 1/2. Isomerase that catalyzes the conversion of deoxy-ribose 1-phosphate (dRib-1-P) and ribose 1-phosphate (Rib-1-P) to deoxy-ribose 5-phosphate (dRib-5-P) and ribose 5-phosphate (Rib-5-P), respectively. The chain is Phosphopentomutase from Clostridium novyi (strain NT).